Reading from the N-terminus, the 1072-residue chain is Zinc finger MIZ domain-containing protein 1 (1072 aa).

The interval methionine 1–proline 120 is sufficient for transactivation activity; sufficient for interaction with NOTCH1. Lysine 91 is covalently cross-linked (Glycyl lysine isopeptide (Lys-Gly) (interchain with G-Cter in SUMO2)). Disordered regions lie at residues glutamine 112–histidine 141 and threonine 362–serine 538. Residues proline 128–histidine 141 show a composition bias toward low complexity. Over residues tyrosine 419–glutamine 436 the composition is skewed to polar residues. The span at tyrosine 437–leucine 446 shows a compositional bias: pro residues. Over residues serine 489–serine 501 the composition is skewed to low complexity. The segment covering serine 517 to threonine 528 has biased composition (pro residues). The segment at glycine 734 to histidine 815 adopts an SP-RING-type zinc-finger fold. Zn(2+) contacts are provided by cysteine 765, histidine 767, cysteine 788, and cysteine 791. Residues lysine 841 and lysine 850 each participate in a glycyl lysine isopeptide (Lys-Gly) (interchain with G-Cter in SUMO2) cross-link. The tract at residues proline 844 to asparagine 1072 is transactivation domain. Over residues glycine 875–glycine 886 the composition is skewed to pro residues. The segment at glycine 875 to asparagine 1072 is disordered. 2 stretches are compositionally biased toward polar residues: residues threonine 888–glycine 902 and serine 958–glutamine 968. Over residues alanine 988–alanine 1001 the composition is skewed to pro residues. A compositionally biased stretch (low complexity) spans proline 1045 to asparagine 1072.

Interacts with AR, but not with ESR1, NR3C1, PGR, THRB nor VDR. Interacts with NOTCH1 and RBPJ. Interacts with SMARCA4. Interacts (via SP-RING-type domain) with SMAD3 and SMAD4 (via MH2 domain). Expressed in brain.

The protein resides in the nucleus. It is found in the nucleoplasm. The protein localises to the cytoplasm. Functionally, acts as a transcriptional coactivator. Increases ligand-dependent transcriptional activity of AR and promotes AR sumoylation. The stimulation of AR activity is dependent upon sumoylation. Also functions as a transcriptional coactivator in the TGF-beta signaling pathway by increasing the activity of the SMAD3/SMAD4 transcriptional complex. Involved in transcriptional activation of a subset of NOTCH1 target genes including MYC. Involved in thymocyte and T cell development. Involved in the regulation of postmitotic positioning of pyramidal neurons in the developing cerebral cortex. The sequence is that of Zinc finger MIZ domain-containing protein 1 (Zmiz1) from Mus musculus (Mouse).